A 1079-amino-acid polypeptide reads, in one-letter code: Integrator complex subunit 3 homolog (1079 aa).

Disordered stretches follow at residues 544–574, 925–949, and 1010–1079; these read ETEA…DDLP, YPSS…TPSA, and AVGR…NDSD. The segment covering 938 to 949 has biased composition (low complexity); sequence KGSSAASSTPSA. Phosphoserine occurs at positions 1049, 1050, 1054, and 1055. The span at 1062–1073 shows a compositional bias: basic residues; it reads HKITQAAKKRKK.

Belongs to the Integrator subunit 3 family. Belongs to the multiprotein complex Integrator, at least composed of IntS1, IntS2, IntS3, IntS4, omd/IntS5, IntS6, defl/IntS7, IntS8, IntS9, IntS10, IntS11, IntS12, asun/IntS13, IntS14 and IntS15. The core complex associates with protein phosphatase 2A subunits mts/PP2A and Pp2A-29B, to form the Integrator-PP2A (INTAC) complex.

The protein resides in the nucleus. The protein localises to the cytoplasm. In terms of biological role, component of the integrator complex, a multiprotein complex that terminates RNA polymerase II (Pol II) transcription in the promoter-proximal region of genes. The integrator complex provides a quality checkpoint during transcription elongation by driving premature transcription termination of transcripts that are unfavorably configured for transcriptional elongation: the complex terminates transcription by (1) catalyzing dephosphorylation of the C-terminal domain (CTD) of Pol II subunit Polr2A/Rbp1 and Spt5, and (2) degrading the exiting nascent RNA transcript via endonuclease activity. The integrator complex is also involved in the 3'-end processing of the U7 snRNA, and also the spliceosomal snRNAs U1, U2, U4 and U5. The protein is Integrator complex subunit 3 homolog (IntS3) of Drosophila mojavensis (Fruit fly).